Reading from the N-terminus, the 733-residue chain is Sulfate transporter (733 aa).

Basic and acidic residues predominate over residues 1 to 18 (MSLKNEEQNDLSPKDSVK). The disordered stretch occupies residues 1–37 (MSLKNEEQNDLSPKDSVKGNDQYRAPSGIHLEREEES). Residues Ser12 and Ser16 each carry the phosphoserine modification. The next 2 helical transmembrane spans lie at 113–133 (VMSGLIVGILLVPQSIAYSLL) and 138–158 (PIYGLYTSFFASLIYFILGTS). N-linked (GlcNAc...) asparagine glycosylation occurs at Asn194. 6 consecutive transmembrane segments (helical) span residues 214 to 234 (IIVGSTVTFVAGVYQVAMGFF), 237 to 257 (GFVSVYLSDALLGGFVTGASF), 379 to 399 (IDAIAIAIIGFAITVSLSEMF), 415 to 435 (AIGFCNIIPSFFHCFTTSAAL), 453 to 473 (VMTALVLLLVLLVIAPLFFSL), and 519 to 539 (LISTEIGLLTGVCFSMFCVIL). The region spanning 563-714 (AYKNLQAKSG…SVYEAMTFAE (152 aa)) is the STAS domain.

It belongs to the SLC26A/SulP transporter (TC 2.A.53) family. In terms of processing, N-glycosylated.

It localises to the cell membrane. The protein resides in the apical cell membrane. It carries out the reaction oxalate(in) + sulfate(out) = oxalate(out) + sulfate(in). The catalysed reaction is sulfate(out) + 2 chloride(in) = sulfate(in) + 2 chloride(out). The enzyme catalyses oxalate(out) + 2 chloride(in) = oxalate(in) + 2 chloride(out). It catalyses the reaction bromide(in) + chloride(out) = bromide(out) + chloride(in). It carries out the reaction nitrate(in) + chloride(out) = nitrate(out) + chloride(in). The catalysed reaction is iodide(in) + chloride(out) = iodide(out) + chloride(in). Sulfate transporter which mediates sulfate uptake into chondrocytes in order to maintain adequate sulfation of proteoglycans which is needed for cartilage development. Mediates electroneutral anion exchange of sulfate ions for oxalate ions, sulfate and oxalate ions for chloride and/or hydroxyl ions and chloride ions for bromide, iodide and nitrate ions. The coupling of sulfate transport to both hydroxyl and chloride ions likely serves to ensure transport at both acidic pH when most sulfate uptake is mediated by sulfate-hydroxide exchange and alkaline pH when most sulfate uptake is mediated by sulfate-chloride exchange. Essential for chondrocyte proliferation, differentiation and cell size expansion. This chain is Sulfate transporter (SLC26A2), found in Bubalus bubalis (Domestic water buffalo).